Consider the following 346-residue polypeptide: Thiamine-phosphate synthase (346 aa).

The tract at residues 1–125 is unknown; it reads MSVTPNPDQH…SKISAQIRYE (125 aa). The tract at residues 126-346 is thiamine-phosphate synthase; it reads IYDLEVIILK…SKELLGKLKK (221 aa). 4-amino-2-methyl-5-(diphosphooxymethyl)pyrimidine is bound by residues 177 to 181 and N209; that span reads QYRCK. 2 residues coordinate Mg(2+): D210 and D229. 4-amino-2-methyl-5-(diphosphooxymethyl)pyrimidine is bound at residue S248. Position 274–276 (274–276) interacts with 2-[(2R,5Z)-2-carboxy-4-methylthiazol-5(2H)-ylidene]ethyl phosphate; the sequence is TKS. 4-amino-2-methyl-5-(diphosphooxymethyl)pyrimidine is bound at residue K277. G304 contacts 2-[(2R,5Z)-2-carboxy-4-methylthiazol-5(2H)-ylidene]ethyl phosphate.

The protein belongs to the thiamine-phosphate synthase family. It depends on Mg(2+) as a cofactor.

The catalysed reaction is 2-[(2R,5Z)-2-carboxy-4-methylthiazol-5(2H)-ylidene]ethyl phosphate + 4-amino-2-methyl-5-(diphosphooxymethyl)pyrimidine + 2 H(+) = thiamine phosphate + CO2 + diphosphate. It carries out the reaction 2-(2-carboxy-4-methylthiazol-5-yl)ethyl phosphate + 4-amino-2-methyl-5-(diphosphooxymethyl)pyrimidine + 2 H(+) = thiamine phosphate + CO2 + diphosphate. The enzyme catalyses 4-methyl-5-(2-phosphooxyethyl)-thiazole + 4-amino-2-methyl-5-(diphosphooxymethyl)pyrimidine + H(+) = thiamine phosphate + diphosphate. Its pathway is cofactor biosynthesis; thiamine diphosphate biosynthesis; thiamine phosphate from 4-amino-2-methyl-5-diphosphomethylpyrimidine and 4-methyl-5-(2-phosphoethyl)-thiazole: step 1/1. Condenses 4-methyl-5-(beta-hydroxyethyl)thiazole monophosphate (THZ-P) and 2-methyl-4-amino-5-hydroxymethyl pyrimidine pyrophosphate (HMP-PP) to form thiamine monophosphate (TMP). This chain is Thiamine-phosphate synthase, found in Prochlorococcus marinus (strain SARG / CCMP1375 / SS120).